Consider the following 204-residue polypeptide: Cytochrome c biogenesis ATP-binding export protein CcmA (204 aa).

Positions 2–202 (LEIRNVTCIR…DSNELKKIRL (201 aa)) constitute an ABC transporter domain. 34–41 (GQNGAGKT) lines the ATP pocket.

It belongs to the ABC transporter superfamily. CcmA exporter (TC 3.A.1.107) family. In terms of assembly, the complex is composed of two ATP-binding proteins (CcmA) and two transmembrane proteins (CcmB).

Its subcellular location is the cell inner membrane. The enzyme catalyses heme b(in) + ATP + H2O = heme b(out) + ADP + phosphate + H(+). Part of the ABC transporter complex CcmAB involved in the biogenesis of c-type cytochromes; once thought to export heme, this seems not to be the case, but its exact role is uncertain. Responsible for energy coupling to the transport system. This is Cytochrome c biogenesis ATP-binding export protein CcmA from Aliivibrio fischeri (strain ATCC 700601 / ES114) (Vibrio fischeri).